The sequence spans 154 residues: Aspartate carbamoyltransferase regulatory chain (154 aa).

Zn(2+) contacts are provided by C109, C114, C138, and C141.

The protein belongs to the PyrI family. Contains catalytic and regulatory chains. It depends on Zn(2+) as a cofactor.

Involved in allosteric regulation of aspartate carbamoyltransferase. The chain is Aspartate carbamoyltransferase regulatory chain from Aliivibrio salmonicida (strain LFI1238) (Vibrio salmonicida (strain LFI1238)).